Consider the following 176-residue polypeptide: Protein CURLY FLAG LEAF 2 (176 aa).

The EAR signature appears at 41-46; it reads FLELSS. Residues 48–82 enclose the WW domain; it reads FSVPSHLEQCLDLKTGEIYYRSWNSGMRVKEDPRK. 2 disordered regions span residues 77-106 and 111-130; these read KEDPRKSMSRGNYADQSSGESSGTVFSSEE and YESEESSSESSPSSRKYHKE. Residues 93 to 106 show a composition bias toward low complexity; sequence SSGESSGTVFSSEE.

As to quaternary structure, may interact with BHLH122/CFLAP1 and BHLH80/CFLAP2.

Functionally, may negatively regulate the cuticle development by interacting with the HD-ZIP IV transcription factor HDG1. The polypeptide is Protein CURLY FLAG LEAF 2 (Arabidopsis thaliana (Mouse-ear cress)).